The primary structure comprises 323 residues: Beta-ketoacyl-[acyl-carrier-protein] synthase III (323 aa).

Catalysis depends on residues Cys-114 and His-250. Residues 251–255 (QANLR) are ACP-binding. Asn-280 is a catalytic residue.

It belongs to the thiolase-like superfamily. FabH family. As to quaternary structure, homodimer.

Its subcellular location is the cytoplasm. It catalyses the reaction malonyl-[ACP] + acetyl-CoA + H(+) = 3-oxobutanoyl-[ACP] + CO2 + CoA. It participates in lipid metabolism; fatty acid biosynthesis. Catalyzes the condensation reaction of fatty acid synthesis by the addition to an acyl acceptor of two carbons from malonyl-ACP. Catalyzes the first condensation reaction which initiates fatty acid synthesis and may therefore play a role in governing the total rate of fatty acid production. Possesses both acetoacetyl-ACP synthase and acetyl transacylase activities. Its substrate specificity determines the biosynthesis of branched-chain and/or straight-chain of fatty acids. The chain is Beta-ketoacyl-[acyl-carrier-protein] synthase III from Cereibacter sphaeroides (strain ATCC 17023 / DSM 158 / JCM 6121 / CCUG 31486 / LMG 2827 / NBRC 12203 / NCIMB 8253 / ATH 2.4.1.) (Rhodobacter sphaeroides).